A 286-amino-acid chain; its full sequence is Bifunctional protein FolD (286 aa).

Residues glycine 163 to serine 165, isoleucine 188, and isoleucine 229 each bind NADP(+).

The protein belongs to the tetrahydrofolate dehydrogenase/cyclohydrolase family. As to quaternary structure, homodimer.

The catalysed reaction is (6R)-5,10-methylene-5,6,7,8-tetrahydrofolate + NADP(+) = (6R)-5,10-methenyltetrahydrofolate + NADPH. The enzyme catalyses (6R)-5,10-methenyltetrahydrofolate + H2O = (6R)-10-formyltetrahydrofolate + H(+). The protein operates within one-carbon metabolism; tetrahydrofolate interconversion. Its function is as follows. Catalyzes the oxidation of 5,10-methylenetetrahydrofolate to 5,10-methenyltetrahydrofolate and then the hydrolysis of 5,10-methenyltetrahydrofolate to 10-formyltetrahydrofolate. The protein is Bifunctional protein FolD of Helicobacter hepaticus (strain ATCC 51449 / 3B1).